Here is a 208-residue protein sequence, read N- to C-terminus: Holliday junction resolvase RecU (208 aa).

Mg(2+)-binding residues include T87, D89, E102, and Q121.

This sequence belongs to the RecU family. It depends on Mg(2+) as a cofactor.

It localises to the cytoplasm. It carries out the reaction Endonucleolytic cleavage at a junction such as a reciprocal single-stranded crossover between two homologous DNA duplexes (Holliday junction).. Functionally, endonuclease that resolves Holliday junction intermediates in genetic recombination. Cleaves mobile four-strand junctions by introducing symmetrical nicks in paired strands. Promotes annealing of linear ssDNA with homologous dsDNA. Required for DNA repair, homologous recombination and chromosome segregation. This Staphylococcus aureus (strain Mu3 / ATCC 700698) protein is Holliday junction resolvase RecU.